Reading from the N-terminus, the 173-residue chain is Alpha-crystallin A chain (173 aa).

Met1 bears the N-acetylmethionine mark. The required for complex formation with BFSP1 and BFSP2 stretch occupies residues 1-63 (MDVTIQHPWF…RTVLDSGISE (63 aa)). Gln6 is modified (deamidated glutamine; partial). The residue at position 45 (Ser45) is a Phosphoserine. The residue at position 50 (Gln50) is a Deamidated glutamine; partial. A sHSP domain is found at 52–162 (LFRTVLDSGI…GHSERAIPVS (111 aa)). Position 70 is an N6-acetyllysine (Lys70). Gln90 bears the Deamidated glutamine; partial mark. At Lys99 the chain carries N6-acetyllysine. Zn(2+)-binding residues include His100, Glu102, and His107. Position 122 is a phosphoserine (Ser122). A Deamidated asparagine; partial modification is found at Asn123. The segment at 145–173 (KVQSGLDAGHSERAIPVSREEKPSSAPSS) is disordered. Position 147 is a deamidated glutamine; partial (Gln147). Over residues 153–167 (GHSERAIPVSREEKP) the composition is skewed to basic and acidic residues. His154 serves as a coordination point for Zn(2+). O-linked (GlcNAc) serine glycosylation occurs at Ser162.

The protein belongs to the small heat shock protein (HSP20) family. Heteromer composed of three CRYAA and one CRYAB subunits. Inter-subunit bridging via zinc ions enhances stability, which is crucial as there is no protein turn over in the lens. Can also form homodimers and homotetramers (dimers of dimers) which serve as the building blocks of homooligomers. Within homooligomers, the zinc-binding motif is created from residues of 3 different molecules. His-100 and Glu-102 from one molecule are ligands of the zinc ion, and His-107 and His-154 residues from additional molecules complete the site with tetrahedral coordination geometry. Part of a complex required for lens intermediate filament formation composed of BFSP1, BFSP2 and CRYAA. Acetylation at Lys-70 may increase chaperone activity. Post-translationally, undergoes age-dependent proteolytical cleavage at the C-terminus.

It localises to the cytoplasm. Its subcellular location is the nucleus. Contributes to the transparency and refractive index of the lens. Acts as a chaperone, preventing aggregation of various proteins under a wide range of stress conditions. Required for the correct formation of lens intermediate filaments as part of a complex composed of BFSP1, BFSP2 and CRYAA. This chain is Alpha-crystallin A chain (CRYAA), found in Ochotona princeps (Southern American pika).